The sequence spans 245 residues: Probable phosphatase YcdX (245 aa).

Zn(2+) is bound by residues H7, H9, H15, H40, E73, H101, H131, D192, and H194.

This sequence belongs to the PHP family. Homotrimer. Zn(2+) is required as a cofactor.

This chain is Probable phosphatase YcdX, found in Salmonella heidelberg (strain SL476).